The sequence spans 263 residues: uncharacterized protein (263 aa).

Position 31-38 (31-38 (GPTGSGKT)) interacts with ATP.

The protein belongs to the CbbQ/NirQ/NorQ/GpvN family.

This is an uncharacterized protein from Staphylococcus saprophyticus subsp. saprophyticus (strain ATCC 15305 / DSM 20229 / NCIMB 8711 / NCTC 7292 / S-41).